A 643-amino-acid polypeptide reads, in one-letter code: Protein cueball (643 aa).

The first 21 residues, 1-21, serve as a signal peptide directing secretion; it reads MMIWVPALIFLSACLLPRSNG. Topologically, residues 22-530 are extracellular; sequence TPLEWDFAVT…VCQTPFVWTS (509 aa). N-linked (GlcNAc...) asparagine glycosylation is found at asparagine 77 and asparagine 103. LDL-receptor class B repeat units lie at residues 116–163, 164–208, and 209–254; these read RNLF…DICR, RKLY…DQLS, and DRLF…TNDA. Residue asparagine 172 is glycosylated (N-linked (GlcNAc...) asparagine). The segment covering 276–290 has biased composition (polar residues); the sequence is ATTTVRPEVESSTDG. A disordered region spans residues 276–303; sequence ATTTVRPEVESSTDGTESESKQESEPVE. An N-linked (GlcNAc...) asparagine glycan is attached at asparagine 312. EGF-like domains follow at residues 363–397, 398–429, and 432–470; these read RMDQLERDHCMNGGSYISKRDLCICPAGFKGSRCE, IRECHNYCVHGTCQMSDLAYPKCYCQPGFTGE, and EVSNCAGLCLNGGHCRLGETEKDQPSCECPANFAGERCE. Disulfide bonds link cysteine 372/cysteine 385, cysteine 387/cysteine 396, cysteine 401/cysteine 410, cysteine 405/cysteine 420, cysteine 436/cysteine 446, cysteine 440/cysteine 458, and cysteine 460/cysteine 469. N-linked (GlcNAc...) asparagine glycans are attached at residues asparagine 472 and asparagine 507. A helical transmembrane segment spans residues 531–551; sequence SVIIILVVGIVFSLLLITTII. Topologically, residues 552-643 are cytoplasmic; sequence HGIRRLYKPK…LIHNMEDDLY (92 aa).

It belongs to the cueball family.

The protein resides in the cell membrane. Its function is as follows. Has a role in spermatogenesis and oogenesis. The polypeptide is Protein cueball (Drosophila ananassae (Fruit fly)).